An 84-amino-acid chain; its full sequence is Cell division topological specificity factor (84 aa).

The protein belongs to the MinE family.

Prevents the cell division inhibition by proteins MinC and MinD at internal division sites while permitting inhibition at polar sites. This ensures cell division at the proper site by restricting the formation of a division septum at the midpoint of the long axis of the cell. In Pseudomonas fluorescens (strain Pf0-1), this protein is Cell division topological specificity factor.